Here is a 189-residue protein sequence, read N- to C-terminus: MINTNDFKTGQTIKFNNQIYQIIEFLHVKPGKGTAFVRSKLRNLRTGSVIDHTFNAGIKLEPALINKIKMQFLYSSQEKYIFMNTQTYEQLEINKDQLKEKLHYLYEGLLVEIIFYNNNEILTISLPDKISLKVTYAEPGVKGDTKTNSFKDATLETGLVIKVPLFINTGEKIIVNTETGLYLSRDNNK.

The protein belongs to the elongation factor P family.

It is found in the cytoplasm. It participates in protein biosynthesis; polypeptide chain elongation. Its function is as follows. Involved in peptide bond synthesis. Stimulates efficient translation and peptide-bond synthesis on native or reconstituted 70S ribosomes in vitro. Probably functions indirectly by altering the affinity of the ribosome for aminoacyl-tRNA, thus increasing their reactivity as acceptors for peptidyl transferase. The sequence is that of Elongation factor P from Phytoplasma australiense.